We begin with the raw amino-acid sequence, 436 residues long: Methylenetetrahydrofolate--tRNA-(uracil-5-)-methyltransferase TrmFO (436 aa).

9–14 (GAGLAG) lines the FAD pocket.

It belongs to the MnmG family. TrmFO subfamily. FAD serves as cofactor.

It localises to the cytoplasm. It carries out the reaction uridine(54) in tRNA + (6R)-5,10-methylene-5,6,7,8-tetrahydrofolate + NADH + H(+) = 5-methyluridine(54) in tRNA + (6S)-5,6,7,8-tetrahydrofolate + NAD(+). It catalyses the reaction uridine(54) in tRNA + (6R)-5,10-methylene-5,6,7,8-tetrahydrofolate + NADPH + H(+) = 5-methyluridine(54) in tRNA + (6S)-5,6,7,8-tetrahydrofolate + NADP(+). Its function is as follows. Catalyzes the folate-dependent formation of 5-methyl-uridine at position 54 (M-5-U54) in all tRNAs. In Ligilactobacillus salivarius (strain UCC118) (Lactobacillus salivarius), this protein is Methylenetetrahydrofolate--tRNA-(uracil-5-)-methyltransferase TrmFO.